Here is a 161-residue protein sequence, read N- to C-terminus: RNA pyrophosphohydrolase (161 aa).

Residues 12-154 (PYRPGVGMMI…KRKLYQAVVK (143 aa)) form the Nudix hydrolase domain. The Nudix box signature appears at 46–67 (GGIVPGETPSIAAMREMLEEIG).

The protein belongs to the Nudix hydrolase family. RppH subfamily. It depends on a divalent metal cation as a cofactor.

Functionally, accelerates the degradation of transcripts by removing pyrophosphate from the 5'-end of triphosphorylated RNA, leading to a more labile monophosphorylated state that can stimulate subsequent ribonuclease cleavage. This chain is RNA pyrophosphohydrolase, found in Rickettsia conorii (strain ATCC VR-613 / Malish 7).